Here is a 376-residue protein sequence, read N- to C-terminus: GDSL esterase/lipase 2 (376 aa).

The N-terminal stretch at 1–25 (MENSRSTLIIFFAYTTIILIGSINC) is a signal peptide. N-linked (GlcNAc...) asparagine glycosylation occurs at N36. The active-site Nucleophile is the S46. Residues N186 and N205 are each glycosylated (N-linked (GlcNAc...) asparagine). Catalysis depends on residues D340 and H343. N362 carries an N-linked (GlcNAc...) asparagine glycan.

This sequence belongs to the 'GDSL' lipolytic enzyme family. In terms of tissue distribution, expressed seedlings, roots and stems.

Its subcellular location is the secreted. Its function is as follows. Involved in the resistance to the necrotropic bacteria Erwinia carotovora, probably via negative regulation of auxin signaling. Possesses lipase and antimicrobial activities, inhibiting germination of fungal spores (e.g. Alternaria brassicicola). In Arabidopsis thaliana (Mouse-ear cress), this protein is GDSL esterase/lipase 2 (GLIP2).